Here is a 549-residue protein sequence, read N- to C-terminus: Sphingosine-1-phosphate transporter SPNS2 (549 aa).

2 disordered regions span residues 14–36 (AEEE…GAGG) and 78–97 (PGCA…PASL). Helical transmembrane passes span 141-161 (GLLQ…FGYL), 169-189 (VILS…SFIP), 202-222 (LVGI…GDLF), 229-249 (LMLS…YITG), 261-281 (WALR…LILV), 320-340 (LATS…PLYL), 364-384 (LIFG…GAGA), 398-418 (LVCA…FVAA), 422-442 (IVGA…NWAI), 466-486 (TSHL…SDLI), and 507-527 (LCPF…LFFL).

This sequence belongs to the major facilitator superfamily. Spinster (TC 2.A.1.49) family. As to expression, expression is high in the lungs and liver, low in the lymph nodes, spleen and bone marrow, and very low but detectable in the thymus. Not expressed in red blood cells. Also expressed in the inner ear: expressed in the cochlea, both in the lateral wall and organ of Corti.

The protein resides in the cell membrane. The protein localises to the endosome membrane. It catalyses the reaction sphing-4-enine 1-phosphate(in) = sphing-4-enine 1-phosphate(out). It carries out the reaction sphinganine 1-phosphate(in) = sphinganine 1-phosphate(out). Its function is as follows. Lipid transporter that specifically mediates export of sphingosine-1-phosphate (sphing-4-enine 1-phosphate, S1P) and sphinganine-1-phosphate in the lymph, thereby playing a role in lymphocyte trafficking. S1P is a bioactive signaling molecule that regulates many physiological processes important for the development and for the immune system. Regulates levels of S1P and the S1P gradient that exists between the high circulating concentrations of S1P and low tissue levels that control lymphocyte trafficking. Required for the egress of T-cells from lymph nodes during an immune response by mediating S1P secretion, which generates a gradient that enables activated T-cells to access lymph. Also required for the egress of immature B-cells from the bone marrow. In contrast, it does not mediate S1P release from red blood cells. Involved in auditory function: S1P release in the inner ear is required for maintenance of the endocochlear potential in the cochlea. In addition to export, also able to mediate S1P import. This chain is Sphingosine-1-phosphate transporter SPNS2, found in Mus musculus (Mouse).